Here is a 1334-residue protein sequence, read N- to C-terminus: Aldehyde oxidase 3 (1334 aa).

In terms of domain architecture, 2Fe-2S ferredoxin-type spans 8–95; the sequence is DELIFFVNGK…GAAVTTVEGI (88 aa). [2Fe-2S] cluster-binding residues include Cys47, Cys52, Cys55, and Cys77. Residue Gln116 coordinates Mo-molybdopterin. 4 residues coordinate [2Fe-2S] cluster: Cys117, Cys120, Cys152, and Cys154. In terms of domain architecture, FAD-binding PCMH-type spans 236–421; sequence FRGERTTWIA…ISVFVPLSRK (186 aa). 264–271 contacts FAD; the sequence is LVIGNTCL. Phosphoserine is present on Ser320. Residues Ser354, His358, Asp367, and Leu411 each contribute to the FAD site. Gly801, Leu1042, and Gln1198 together coordinate Mo-molybdopterin. Glu1265 functions as the Proton acceptor; for azaheterocycle hydroxylase activity in the catalytic mechanism.

The protein belongs to the xanthine dehydrogenase family. In terms of assembly, homodimer. [2Fe-2S] cluster is required as a cofactor. FAD serves as cofactor. Requires Mo-molybdopterin as cofactor.

It is found in the cytoplasm. The enzyme catalyses an aldehyde + O2 + H2O = a carboxylate + H2O2 + H(+). Oxidase with broad substrate specificity, oxidizing aromatic azaheterocycles, such as N1-methylnicotinamide and phthalazine, as well as aldehydes, such as benzaldehyde, retinal and pyridoxal. Plays a key role in the metabolism of xenobiotics and drugs containing aromatic azaheterocyclic substituents. Is probably involved in the regulation of reactive oxygen species homeostasis. Is a prominent source of superoxide generation via the one-electron reduction of molecular oxygen. Also catalyzes nitric oxide (NO) production; under anaerobic conditions, reduces nitrite to NO with NADH or aldehyde as electron donor, but under aerobic conditions, NADH is the preferred substrate. These reactions may be catalyzed by several isozymes. The chain is Aldehyde oxidase 3 (Aox3) from Rattus norvegicus (Rat).